A 347-amino-acid chain; its full sequence is A-type ATP synthase subunit C (347 aa).

This sequence belongs to the V-ATPase V0D/AC39 subunit family. In terms of assembly, has multiple subunits with at least A(3), B(3), C, D, E, F, H, I and proteolipid K(x).

Its subcellular location is the cell membrane. Functionally, component of the A-type ATP synthase that produces ATP from ADP in the presence of a proton gradient across the membrane. The sequence is that of A-type ATP synthase subunit C from Haloquadratum walsbyi (strain DSM 16790 / HBSQ001).